We begin with the raw amino-acid sequence, 84 residues long: Putative pelota-like protein YCL001W-B (84 aa).

Belongs to the eukaryotic release factor 1 family. Pelota subfamily. Highly divergent.

This chain is Putative pelota-like protein YCL001W-B, found in Saccharomyces cerevisiae (strain ATCC 204508 / S288c) (Baker's yeast).